A 296-amino-acid polypeptide reads, in one-letter code: Nitrogenase iron protein (296 aa).

10–17 (GKGGIGKS) lines the ATP pocket. Cys-98 contacts [4Fe-4S] cluster. The residue at position 101 (Arg-101) is an ADP-ribosylarginine; by dinitrogenase reductase ADP-ribosyltransferase. A [4Fe-4S] cluster-binding site is contributed by Cys-133.

It belongs to the NifH/BchL/ChlL family. In terms of assembly, homodimer. It depends on [4Fe-4S] cluster as a cofactor. In terms of processing, the reversible ADP-ribosylation of Arg-101 inactivates the nitrogenase reductase and regulates nitrogenase activity.

The catalysed reaction is N2 + 8 reduced [2Fe-2S]-[ferredoxin] + 16 ATP + 16 H2O = H2 + 8 oxidized [2Fe-2S]-[ferredoxin] + 2 NH4(+) + 16 ADP + 16 phosphate + 6 H(+). Its function is as follows. The key enzymatic reactions in nitrogen fixation are catalyzed by the nitrogenase complex, which has 2 components: the iron protein and the molybdenum-iron protein. This is Nitrogenase iron protein from Magnetococcus marinus (strain ATCC BAA-1437 / JCM 17883 / MC-1).